Consider the following 93-residue polypeptide: MPDLMIDHREKAHALLKADADKILRLIEVQIENLTMPQCPVYEDVLDTQMYGLSREIDFAVRLELISEIEGKALLENLEKKLNILHEASQNTL.

This sequence belongs to the UPF0358 family.

The polypeptide is UPF0358 protein OB1428 (Oceanobacillus iheyensis (strain DSM 14371 / CIP 107618 / JCM 11309 / KCTC 3954 / HTE831)).